A 459-amino-acid chain; its full sequence is tRNA modification GTPase MnmE (459 aa).

Residues Arg23, Glu85, and Arg124 each coordinate (6S)-5-formyl-5,6,7,8-tetrahydrofolate. The TrmE-type G domain maps to 221-380 (GLSTAIIGRP…LEKAIADTFF (160 aa)). Asn231 serves as a coordination point for K(+). GTP-binding positions include 231 to 236 (NVGKSS), 250 to 256 (TEIPGTT), and 275 to 278 (DTAG). Ser235 is a Mg(2+) binding site. K(+) contacts are provided by Thr250, Ile252, and Thr255. Mg(2+) is bound at residue Thr256. Lys459 serves as a coordination point for (6S)-5-formyl-5,6,7,8-tetrahydrofolate.

Belongs to the TRAFAC class TrmE-Era-EngA-EngB-Septin-like GTPase superfamily. TrmE GTPase family. As to quaternary structure, homodimer. Heterotetramer of two MnmE and two MnmG subunits. K(+) is required as a cofactor.

The protein localises to the cytoplasm. In terms of biological role, exhibits a very high intrinsic GTPase hydrolysis rate. Involved in the addition of a carboxymethylaminomethyl (cmnm) group at the wobble position (U34) of certain tRNAs, forming tRNA-cmnm(5)s(2)U34. This is tRNA modification GTPase MnmE from Oceanobacillus iheyensis (strain DSM 14371 / CIP 107618 / JCM 11309 / KCTC 3954 / HTE831).